A 233-amino-acid chain; its full sequence is Biosynthetic peptidoglycan transglycosylase (233 aa).

Residues 8–28 form a helical membrane-spanning segment; the sequence is LIALPVGIFIFFNAYVYGNII.

The protein belongs to the glycosyltransferase 51 family.

Its subcellular location is the cell inner membrane. The enzyme catalyses [GlcNAc-(1-&gt;4)-Mur2Ac(oyl-L-Ala-gamma-D-Glu-L-Lys-D-Ala-D-Ala)](n)-di-trans,octa-cis-undecaprenyl diphosphate + beta-D-GlcNAc-(1-&gt;4)-Mur2Ac(oyl-L-Ala-gamma-D-Glu-L-Lys-D-Ala-D-Ala)-di-trans,octa-cis-undecaprenyl diphosphate = [GlcNAc-(1-&gt;4)-Mur2Ac(oyl-L-Ala-gamma-D-Glu-L-Lys-D-Ala-D-Ala)](n+1)-di-trans,octa-cis-undecaprenyl diphosphate + di-trans,octa-cis-undecaprenyl diphosphate + H(+). Its pathway is cell wall biogenesis; peptidoglycan biosynthesis. Its function is as follows. Peptidoglycan polymerase that catalyzes glycan chain elongation from lipid-linked precursors. The sequence is that of Biosynthetic peptidoglycan transglycosylase from Neisseria meningitidis serogroup C (strain 053442).